A 363-amino-acid chain; its full sequence is 3-dehydroquinate synthase (363 aa).

Residues 134 to 135 (TT), K147, K156, and 174 to 177 (TLIT) each bind NAD(+). 3 residues coordinate Zn(2+): E189, H254, and H271.

Belongs to the sugar phosphate cyclases superfamily. Dehydroquinate synthase family. The cofactor is NAD(+). It depends on Co(2+) as a cofactor. Zn(2+) is required as a cofactor.

It localises to the cytoplasm. The enzyme catalyses 7-phospho-2-dehydro-3-deoxy-D-arabino-heptonate = 3-dehydroquinate + phosphate. It functions in the pathway metabolic intermediate biosynthesis; chorismate biosynthesis; chorismate from D-erythrose 4-phosphate and phosphoenolpyruvate: step 2/7. Its function is as follows. Catalyzes the conversion of 3-deoxy-D-arabino-heptulosonate 7-phosphate (DAHP) to dehydroquinate (DHQ). The protein is 3-dehydroquinate synthase of Prochlorococcus marinus subsp. pastoris (strain CCMP1986 / NIES-2087 / MED4).